Reading from the N-terminus, the 189-residue chain is GTP cyclohydrolase 1 (189 aa).

Positions 78, 81, and 150 each coordinate Zn(2+).

It belongs to the GTP cyclohydrolase I family. Homomer.

The enzyme catalyses GTP + H2O = 7,8-dihydroneopterin 3'-triphosphate + formate + H(+). It participates in cofactor biosynthesis; 7,8-dihydroneopterin triphosphate biosynthesis; 7,8-dihydroneopterin triphosphate from GTP: step 1/1. The polypeptide is GTP cyclohydrolase 1 (Bacillus mycoides (strain KBAB4) (Bacillus weihenstephanensis)).